The sequence spans 283 residues: ACT domain-containing protein DS12, chloroplastic (283 aa).

Residues 1–56 (MAEMAVTAALRPCSGVSPAVSGTSHRRRRPAAWRALAPPPPHAGLRLSSPAVRVPR) constitute a chloroplast transit peptide. Residues 14-78 (SGVSPAVSGT…SNTDTVPTPK (65 aa)) are disordered. A compositionally biased stretch (low complexity) spans 48-63 (SSPAVRVPRAASSAAV). 2 ACT domains span residues 91 to 171 (IVEI…ASSQ) and 206 to 276 (LLVV…LRRP).

The protein resides in the plastid. It is found in the chloroplast. The protein is ACT domain-containing protein DS12, chloroplastic of Oryza sativa subsp. indica (Rice).